Here is a 152-residue protein sequence, read N- to C-terminus: UPF0178 protein YaiI (152 aa).

This sequence belongs to the UPF0178 family.

The sequence is that of UPF0178 protein YaiI from Escherichia coli O81 (strain ED1a).